The primary structure comprises 133 residues: MAKAANTAAQRARKKVRKNVADGIAHVHASFNNTIITITDRQGNALSWATSGGQGFKGSRKSTPFAAQVAAESAGRVAQDQGIKNLEVRIKGPGPGRESAVRALNNLGIKIQLIEDVTPVPHNGCRPPKRRRI.

Belongs to the universal ribosomal protein uS11 family. As to quaternary structure, part of the 30S ribosomal subunit. Interacts with proteins S7 and S18. Binds to IF-3.

Its function is as follows. Located on the platform of the 30S subunit, it bridges several disparate RNA helices of the 16S rRNA. Forms part of the Shine-Dalgarno cleft in the 70S ribosome. This chain is Small ribosomal subunit protein uS11, found in Ralstonia pickettii (strain 12J).